Consider the following 144-residue polypeptide: Large ribosomal subunit protein uL13 (144 aa).

Belongs to the universal ribosomal protein uL13 family. As to quaternary structure, part of the 50S ribosomal subunit.

Its function is as follows. This protein is one of the early assembly proteins of the 50S ribosomal subunit, although it is not seen to bind rRNA by itself. It is important during the early stages of 50S assembly. This Oleidesulfovibrio alaskensis (strain ATCC BAA-1058 / DSM 17464 / G20) (Desulfovibrio alaskensis) protein is Large ribosomal subunit protein uL13.